The following is a 299-amino-acid chain: Probable lipid kinase YegS (299 aa).

One can recognise a DAGKc domain in the interval 2-133 (ANFPDSLLIL…IDMARVNDKT (132 aa)). Residues Thr-40, 66–72 (GDGTINE), and Thr-95 each bind ATP. Residues Leu-215, Asp-218, and Leu-220 each contribute to the Mg(2+) site. Residue Glu-271 is the Proton acceptor of the active site.

Belongs to the diacylglycerol/lipid kinase family. YegS lipid kinase subfamily. Requires Mg(2+) as cofactor. It depends on Ca(2+) as a cofactor.

The protein localises to the cytoplasm. Probably phosphorylates lipids; the in vivo substrate is unknown. This Salmonella arizonae (strain ATCC BAA-731 / CDC346-86 / RSK2980) protein is Probable lipid kinase YegS.